The chain runs to 230 residues: Increased recombination centers protein 19 (230 aa).

It belongs to the IRC19 family.

Its function is as follows. Involved in sporulation and maintenance of the mitochondrial DNA. Is probably involved in a pathway contributing to genomic integrity. This is Increased recombination centers protein 19 (IRC19) from Saccharomyces cerevisiae (strain ATCC 204508 / S288c) (Baker's yeast).